Reading from the N-terminus, the 745-residue chain is MAANKDEFSVKQISPKLGGERGARNPYGPTSLHDLVEQMEFLYVDVIRAIKNSDVDPGPCDPVVEITLGNYKSSTKDLPVGPNMDWNQVFAFDKTKGDVLSVTLKDRLTNTVINKSNFKLASEIPTRAPPDARIAPQRYPLRNTKTGFYLMMSVWFGTQVDEVYPVAWFSDASEVSTCVINTRPKVYLAPRLCYVRVTIVSGHDLISTDRNRTPSVYVTATLGQVTLKTEVSSGTNPSWNKDLIFVASEPLEGTVYIRLIDRVDDQHEERIIGKLEKKLSEMTPLKVPSSAPALFYDIEVEPAGDSRRFASRLKMKLATDQAYHVAEESIQYSSDYRPFVKGLWPCLLGKLEIGILGATGLKGSDERKQGIDSYVVAKYGNKWARTRTVVNSVTPKWNEQYSWDDYEKCTVLTLGIYDNRQIFKEDQANDVPIGKVRISLNRVESDWIYACSYPILKLGSSGLKKMGELQLAVRFVYVAQGYARYSAPFRWLLPKAHYKSPLSVYQIEEMRAEAVKINCANLARTEPALRNEVVWDMLKPKTNTRYSTCDMRKVAALAFFDLFLYWPSLIVWLAIYLVVVPCIVLVGLSGLHKFLTRKFWNKRENPRSPLIVNDLKLWKLESPNLDELEEEFDSFPSSVSDVNILRMRYDRIRMVCQRPMILLGDAASQGERLYALLTFNGDDQLASFYCWLICVLVALCWYNIPMWLWSLYPIAYWLNFTPLRNDMPCGVSNFFRRLPTNEVLF.

The segment at 1 to 30 (MAANKDEFSVKQISPKLGGERGARNPYGPT) is disordered. C2 domains follow at residues 21-139 (RGAR…PQRY), 171-293 (DASE…SAPA), and 326-453 (AEES…ACSY). Asp56, Asp61, Asp106, and Asn110 together coordinate Ca(2+). 2 helical membrane-spanning segments follow: residues 568–588 (SLIV…LVGL) and 688–708 (FYCW…PMWL).

Belongs to the MCTP family. The cofactor is Ca(2+). In terms of tissue distribution, expressed in incipient leaf primordia.

It localises to the cell membrane. It is found in the cytoplasm. May function as a signaling molecule by regulating the trafficking of other regulators. The protein is Multiple C2 domain and transmembrane region protein 13 of Arabidopsis thaliana (Mouse-ear cress).